The following is a 2521-amino-acid chain: Partially reducing polyketide synthase tpeA (2521 aa).

The Ketosynthase family 3 (KS3) domain occupies 7-434 (DQSIAVIGLS…GSNAHAIIDN (428 aa)). The interval 47-66 (RWNSRRFQDDKNHSQNTSRT) is disordered. Residues C180, H315, and H357 each act as for beta-ketoacyl synthase activity in the active site. Residues 554–855 (YVFTGQGAQW…LRGPVTQILQ (302 aa)) enclose the Malonyl-CoA:ACP transacylase (MAT) domain. The interval 948–1088 (SSFIGLPMPS…GLVTVEFEQL (141 aa)) is N-terminal hotdog fold. In terms of domain architecture, PKS/mFAS DH spans 948-1258 (SSFIGLPMPS…CVEMPSTAGV (311 aa)). The dehydratase (DH) domain stretch occupies residues 949-1256 (SFIGLPMPSF…LTCVEMPSTA (308 aa)). The C-terminal hotdog fold stretch occupies residues 1100–1258 (TTVQQAEAFY…CVEMPSTAGV (159 aa)). Positions 1809-2121 (GMLNTLCFQA…DNRHHGKITL (313 aa)) constitute an Enoyl reductase (ER) domain. Residues 2146-2323 (TYLIAGGLGG…AVTIDLGIVK (178 aa)) enclose the Ketoreductase (KR) domain. A Carrier domain is found at 2433-2510 (DAVLFVTGAV…SFARDLVGKG (78 aa)). S2470 is subject to O-(pantetheine 4'-phosphoryl)serine.

The cofactor is pantetheine 4'-phosphate.

Its pathway is secondary metabolite biosynthesis. Partially reducing polyketide synthase; part of the gene cluster that mediates the biosynthesis of polyesters containing 2,4-dihydroxy-6-(2-hydroxypropyl)benzoate and 3-hydroxybutyrate moieties, such as talapolyester G, 15G256beta and 15G256beta-2; as well as to oxidized derivatives such as 15G256alpha. The biosynthesis of the polyesters probably starts with the formation of the diketide 3-hydroxybutyryl-S-ACP catalyzed by the partially reducing polyketide synthase tpeA. The acceptance of 3-hydroxybutyryl by the non-reducing polyketide synthase tpeB would initiate further elongation and cyclization, catalyzed by KS and PT, respectively, to form 2,4-dihydroxy-6-(2-hydroxyn-propyl)benzoyl-S-ACP intermediate. The TE domain could catalyze lactonization at this step to yield 6-hydroxymellein as a derailment product. The polyesterification process maybe occurs when additional molecules of 3-hydroxybutyryl are transferred to tpeB. Following the first esterification step, an intramolecular cyclization catalyzed by the TE domain of tpeB would give talarodioxadione 1, whereas the ethyl esterification of talapolyester G perhaps happens spontaneously. Further oxidation by the cytochrome P450 monooxygenase tpeC then leads to the formation of oxidized derivatives. The polypeptide is Partially reducing polyketide synthase tpeA (Talaromyces stipitatus (strain ATCC 10500 / CBS 375.48 / QM 6759 / NRRL 1006) (Penicillium stipitatum)).